Reading from the N-terminus, the 257-residue chain is Putative hydro-lyase Bcen2424_3550 (257 aa).

This sequence belongs to the D-glutamate cyclase family.

This chain is Putative hydro-lyase Bcen2424_3550, found in Burkholderia cenocepacia (strain HI2424).